The following is a 341-amino-acid chain: L-threonine 3-dehydrogenase (341 aa).

A Zn(2+)-binding site is contributed by Cys38. Residues Thr40 and His43 each act as charge relay system in the active site. Residues His63, Glu64, Cys93, Cys96, Cys99, and Cys107 each coordinate Zn(2+). Residues Ile175, Asp195, Arg200, 262 to 264 (LGI), and 286 to 287 (IY) each bind NAD(+).

The protein belongs to the zinc-containing alcohol dehydrogenase family. In terms of assembly, homotetramer. Zn(2+) is required as a cofactor.

It localises to the cytoplasm. It carries out the reaction L-threonine + NAD(+) = (2S)-2-amino-3-oxobutanoate + NADH + H(+). It functions in the pathway amino-acid degradation; L-threonine degradation via oxydo-reductase pathway; glycine from L-threonine: step 1/2. In terms of biological role, catalyzes the NAD(+)-dependent oxidation of L-threonine to 2-amino-3-ketobutyrate. This chain is L-threonine 3-dehydrogenase, found in Idiomarina loihiensis (strain ATCC BAA-735 / DSM 15497 / L2-TR).